Reading from the N-terminus, the 218-residue chain is Cytidylate kinase (218 aa).

7–15 (GPSASGKSS) is an ATP binding site.

Belongs to the cytidylate kinase family. Type 1 subfamily.

Its subcellular location is the cytoplasm. It catalyses the reaction CMP + ATP = CDP + ADP. The catalysed reaction is dCMP + ATP = dCDP + ADP. In Borrelia hermsii (strain HS1 / DAH), this protein is Cytidylate kinase.